Here is a 407-residue protein sequence, read N- to C-terminus: Transcriptional regulator UL34 (407 aa).

Positions 268-330 (AAGPPEADEN…ENEEEEEELF (63 aa)) are disordered. Over residues 273–286 (EADENNDEGEEDDD) the composition is skewed to acidic residues. Residues 287 to 301 (ELRHSDPAPLHDSKK) are compositionally biased toward basic and acidic residues. The span at 302–312 (PRNARRPRTRV) shows a compositional bias: basic residues.

Belongs to the HHV-5 UL34 protein family.

The protein localises to the host nucleus. Functionally, acts as a transcriptional repressor of the US3 gene expression through a specific DNA sequence named the transcriptional repressive element (tre). This is Transcriptional regulator UL34 (UL34) from Homo sapiens (Human).